Here is a 150-residue protein sequence, read N- to C-terminus: Large ribosomal subunit protein bL9 (150 aa).

It belongs to the bacterial ribosomal protein bL9 family.

Its function is as follows. Binds to the 23S rRNA. The sequence is that of Large ribosomal subunit protein bL9 from Desulforudis audaxviator (strain MP104C).